The primary structure comprises 311 residues: tRNA dimethylallyltransferase (311 aa).

12–19 serves as a coordination point for ATP; it reads GPTASGKT. Position 14-19 (14-19) interacts with substrate; sequence TASGKT. Interaction with substrate tRNA stretches follow at residues 37–40, 161–165, and 241–246; these read DSAL, QRINR, and RCVGYR.

It belongs to the IPP transferase family. Monomer. Requires Mg(2+) as cofactor.

It carries out the reaction adenosine(37) in tRNA + dimethylallyl diphosphate = N(6)-dimethylallyladenosine(37) in tRNA + diphosphate. In terms of biological role, catalyzes the transfer of a dimethylallyl group onto the adenine at position 37 in tRNAs that read codons beginning with uridine, leading to the formation of N6-(dimethylallyl)adenosine (i(6)A). The sequence is that of tRNA dimethylallyltransferase from Histophilus somni (strain 2336) (Haemophilus somnus).